A 901-amino-acid chain; its full sequence is Protein translocase subunit SecA (901 aa).

ATP contacts are provided by residues glutamine 87, 105–109 (GEGKT), and aspartate 512. Zn(2+) is bound by residues cysteine 885, cysteine 887, cysteine 896, and histidine 897.

This sequence belongs to the SecA family. As to quaternary structure, monomer and homodimer. Part of the essential Sec protein translocation apparatus which comprises SecA, SecYEG and auxiliary proteins SecDF-YajC and YidC. Zn(2+) serves as cofactor.

The protein localises to the cell inner membrane. It localises to the cytoplasm. The catalysed reaction is ATP + H2O + cellular proteinSide 1 = ADP + phosphate + cellular proteinSide 2.. Functionally, part of the Sec protein translocase complex. Interacts with the SecYEG preprotein conducting channel. Has a central role in coupling the hydrolysis of ATP to the transfer of proteins into and across the cell membrane, serving both as a receptor for the preprotein-SecB complex and as an ATP-driven molecular motor driving the stepwise translocation of polypeptide chains across the membrane. This chain is Protein translocase subunit SecA, found in Salmonella schwarzengrund (strain CVM19633).